A 66-amino-acid chain; its full sequence is Small ribosomal subunit protein bS21 (66 aa).

Belongs to the bacterial ribosomal protein bS21 family.

This chain is Small ribosomal subunit protein bS21, found in Maridesulfovibrio salexigens (strain ATCC 14822 / DSM 2638 / NCIMB 8403 / VKM B-1763) (Desulfovibrio salexigens).